Here is an 812-residue protein sequence, read N- to C-terminus: G patch domain-containing protein 1 homolog (812 aa).

Residues 1–42 (MNRKKLAAYGQEFEDDDEEGSSVSKKPTQIHEEIATDEKGKR) are disordered. The span at 29–40 (QIHEEIATDEKG) shows a compositional bias: basic and acidic residues. One can recognise a G-patch domain in the interval 145 to 191 (SNSIGVRMLRSMGWREGRGIGLANVKQKQKRGGESSEAQFDREQASK). Disordered regions lie at residues 384–416 (ANEV…FPDE) and 584–812 (NEIE…EEKK). The span at 586-609 (IEMRERLLKSRAQRGAEEKKRNQS) shows a compositional bias: basic and acidic residues. 2 stretches are compositionally biased toward acidic residues: residues 610 to 630 (DDDD…ENEA) and 653 to 668 (DGAD…EEAE). Residues 669-720 (EKERQEILKKREEDLKRRREIVEKKEEENRKRVEKELKELENRDLLRVSKQQ) are compositionally biased toward basic and acidic residues. Over residues 761–794 (MKKKKKDKKEKEKKKKSKKSKKSKKEKKTKRKHS) the composition is skewed to basic residues. Acidic residues predominate over residues 800–812 (DSGDNSDGWEEKK).

The protein belongs to the GPATCH1 family.

This chain is G patch domain-containing protein 1 homolog, found in Caenorhabditis elegans.